We begin with the raw amino-acid sequence, 189 residues long: UPF0301 protein A1C_00165 (189 aa).

This sequence belongs to the UPF0301 (AlgH) family.

The chain is UPF0301 protein A1C_00165 from Rickettsia akari (strain Hartford).